The following is a 191-amino-acid chain: UPF0312 protein Shewmr7_1249 (191 aa).

The signal sequence occupies residues 1–22; the sequence is MKKQLLAALIGGFLLAPMAASA.

The protein belongs to the UPF0312 family. Type 1 subfamily.

It localises to the periplasm. The polypeptide is UPF0312 protein Shewmr7_1249 (Shewanella sp. (strain MR-7)).